Consider the following 149-residue polypeptide: MTATLRAFGWLAAFALTVTFAQGAAAEEQQKGKVGAKPVETGVVIRGVTLAGPVGNPGTSTGKTCDFSGEPVDPSGRLEGASVNCRPNGNQANTTPGLPARFNAYCMINAPVKSARLIQAARPENANHCDLSGITPKDATGQFGGAVWR.

The first 23 residues, 1-23 (MTATLRAFGWLAAFALTVTFAQG), serve as a signal peptide directing secretion.

The protein localises to the periplasm. Functionally, may be involved in plant-microbe interaction. This chain is Protein RhiC (rhiC), found in Rhizobium leguminosarum bv. viciae.